A 1491-amino-acid chain; its full sequence is Membrane-associated guanylate kinase, WW and PDZ domain-containing protein 1 (1491 aa).

In terms of domain architecture, PDZ 1 spans 17–105 (ECTVKRGPQG…AVTFKAVRQG (89 aa)). Residues 96 to 287 (AVTFKAVRQG…APITDPSQKF (192 aa)) form the Guanylate kinase-like domain. Residue 103-110 (RQGGRLNK) participates in ATP binding. The segment at 236–267 (AENEEEDDVPEMNSSFTADSGEQEEHTLQETA) is disordered. Residues 300 to 333 (GPLPENWEMAYTENGEVYFIDHNTKTTSWLDPRC) form the WW 1 domain. Residue S357 is modified to Phosphoserine. One can recognise a WW 2 domain in the interval 359 to 392 (LELPAGWEKIEDPVYGIYYVDHINRKTQYENPVL). Residues 411-421 (QQQQQQQQQQQ) show a composition bias toward low complexity. The tract at residues 411–462 (QQQQQQQQQQQTEEWTEDHSALVPPVIPNHPPSNPEPAREVPLQGKPFFTRN) is disordered. The span at 435 to 445 (PVIPNHPPSNP) shows a compositional bias: pro residues. The 83-residue stretch at 472–554 (HTKLRKSSRG…GASVDLELCR (83 aa)) folds into the PDZ 2 domain. Over residues 586 to 600 (QETYDSPASHSSKTG) the composition is skewed to polar residues. 3 disordered regions span residues 586–623 (QETYDSPASHSSKTGKVNGMKDARPSSPADVASNSSHG), 720–832 (QRGG…FGEC), and 932–987 (TENE…GGGS). The 79-residue stretch at 643–721 (TVHIVKGPMG…GSEVTLLVQR (79 aa)) folds into the PDZ 3 domain. Residues S730 and S741 each carry the phosphoserine modification. A compositionally biased stretch (low complexity) spans 742–752 (QNSSQHSVSSH). Over residues 756 to 766 (HTASPSHSTQV) the composition is skewed to polar residues. A Phosphoserine modification is found at S800. In terms of domain architecture, PDZ 4 spans 813–895 (SGLSKGERER…DELICVDGTP (83 aa)). Polar residues predominate over residues 939–951 (PASSHHSSNQPAS). The region spanning 970–1066 (SSGSGSTSGI…DRILAVNGCS (97 aa)) is the PDZ 5 domain. The interaction with FCHSD2 stretch occupies residues 970–1066 (SSGSGSTSGI…DRILAVNGCS (97 aa)). The segment covering 975-987 (STSGIGSGGGGGS) has biased composition (gly residues). Residue S1071 is modified to Phosphoserine. Residues 1112–1130 (TTTHTPSQQGTQETRNTTK) show a composition bias toward polar residues. 2 disordered regions span residues 1112 to 1143 (TTTHTPSQQGTQETRNTTKPKQESQFEFKAPQ) and 1234 to 1491 (DGSV…DLSI). The PDZ 6 domain maps to 1124 to 1206 (ETRNTTKPKQ…DEILEINGET (83 aa)). Basic and acidic residues-rich tracts occupy residues 1278–1338 (DLHK…DAQA), 1354–1396 (KRRE…DGSP), and 1403–1491 (LERL…DLSI). Phosphoserine occurs at positions 1361 and 1412.

Part of a complex composed of AMOTL2, MAGI1 and CDH5, within the complex AMOTL2 acts as a scaffold protein for the interaction of MAGI1 with CDH5. The complex is required for coupling actin fibers to cell junctions in endothelial cells. Interacts through its WW 2 domain with SYNPO and through its PDZ 5 domain with ACTN4. Interacts with cytoplasmic domain of ADGRB1. Interacts via its WW domains with DRPLA. Interacts with ESAM, LRP2 and CXADR. May interact with CTNNB1. Interacts through its PDZ 1 domain with NET1. Interacts with ASIC3 and AMOT. Interacts with FCHSD2. Interacts with IGSF5/JAM4 and through its PDZ 2 and 3 domains with NPHS1 forming a tripartite complex. Interacts with DDN. Interacts with DLL1. Interacts with KCNJ10 and possibly with KCNJ10/KCNJ16 heterodimer; this interaction may facilitate KCNJ10/KCNJ16 potassium channel expression at the basolateral membrane in kidney tubular cells. Interacts with PRRG4 (via cytoplasmic domain). As to quaternary structure, interacts (via PDZ domain) with RAPGEF2. Widely expressed with the exception of skeletal muscle. Isoform 1, isoform 2 and isoform 6 are highly expressed in colon, kidney, lung, liver, and pancreas. Isoform 5 is predominantly expressed in brain and heart. Isoform 3 and isoform 4 are highly expressed in pancreas and brain.

Its subcellular location is the cell junction. The protein resides in the tight junction. It is found in the cell membrane. Functionally, plays a role in coupling actin fibers to cell junctions in endothelial cells, via its interaction with AMOTL2 and CDH5. May regulate acid-induced ASIC3 currents by modulating its expression at the cell surface. The sequence is that of Membrane-associated guanylate kinase, WW and PDZ domain-containing protein 1 (MAGI1) from Homo sapiens (Human).